Consider the following 214-residue polypeptide: MRIILLGAPGAGKGTQAKIISEKLNIPHVSTGDIFRANIKGNTPLGQKAKEYMDKGELVPDELTVEIVKDRLGNVDCVNGFILDGFPRTIPQAEYLDKVLVQMNINLDVALLIDVKDEDIIKRMSGRRVCTNCGATYNVVFNPTKVEGICDVCNSPVIQRADDAAETVLNRLETYHKQTQPLINYYEKAGKLKVAEGAGEVDETSKRVMKALGI.

An ATP-binding site is contributed by 10 to 15; it reads GAGKGT. The tract at residues 30-59 is NMP; sequence STGDIFRANIKGNTPLGQKAKEYMDKGELV. AMP contacts are provided by residues Thr31, Arg36, 57–59, 85–88, and Gln92; these read ELV and GFPR. The segment at 126 to 163 is LID; that stretch reads GRRVCTNCGATYNVVFNPTKVEGICDVCNSPVIQRADD. Arg127 contributes to the ATP binding site. Positions 130 and 133 each coordinate Zn(2+). 136–137 is a binding site for ATP; that stretch reads TY. Zn(2+) is bound by residues Cys150 and Cys153. AMP is bound by residues Arg160 and Arg171. Residue Gly199 coordinates ATP.

Belongs to the adenylate kinase family. In terms of assembly, monomer.

It is found in the cytoplasm. It catalyses the reaction AMP + ATP = 2 ADP. It participates in purine metabolism; AMP biosynthesis via salvage pathway; AMP from ADP: step 1/1. Its function is as follows. Catalyzes the reversible transfer of the terminal phosphate group between ATP and AMP. Plays an important role in cellular energy homeostasis and in adenine nucleotide metabolism. This Ruminiclostridium cellulolyticum (strain ATCC 35319 / DSM 5812 / JCM 6584 / H10) (Clostridium cellulolyticum) protein is Adenylate kinase.